Reading from the N-terminus, the 536-residue chain is Proto-oncogene tyrosine-protein kinase Src (536 aa).

The tract at residues M1–A53 is disordered. G2 carries N-myristoyl glycine lipidation. Over residues K7 to E19 the composition is skewed to basic and acidic residues. S17 bears the Phosphoserine mark. S75 carries the phosphoserine; by CDK5 modification. Positions G84–S145 constitute an SH3 domain. The SH2 domain occupies W151 to C248. A Phosphotyrosine modification is found at Y187. A Protein kinase domain is found at L270–F523. ATP contacts are provided by residues L276–V284 and K298. D389 functions as the Proton acceptor in the catalytic mechanism. A Phosphotyrosine; by autocatalysis modification is found at Y419. Phosphotyrosine; by FAK2 is present on Y419. Y530 is modified (phosphotyrosine; by CSK).

This sequence belongs to the protein kinase superfamily. Tyr protein kinase family. SRC subfamily. As to quaternary structure, part of a complex comprised of PTPRA, BCAR1, BCAR3 (via SH2 domain) and SRC; the formation of the complex is dependent on integrin mediated-tyrosine phosphorylation of PTPRA. Interacts with DDEF1/ASAP1; via the SH3 domain. Interacts with CCPG1. Identified in a complex containing FGFR4, NCAM1, CDH2, PLCG1, FRS2, SRC, SHC1, GAP43 and CTTN. Interacts with ERBB2, STAT1 and PNN. Interacts with DDR1, DDR2 and DAB2. Interacts with CDCP1, TGFB1I1 and TOM1L2. Interacts with the cytoplasmic domain of MUC1, phosphorylates it and increases binding of MUC1 with beta-catenin. Interacts with RALGPS1; via the SH3 domain. Interacts with CAV2 (tyrosine phosphorylated form). Interacts (via the SH3 domain and the protein kinase domain) with ARRB1; the interaction is independent of the phosphorylation state of SRC C-terminus. Interacts with ARRB1 and ARRB2. Interacts with SRCIN1. Interacts with NDFIP2 and more weakly with NDFIP1. Interacts with PIK3CA and/or PIK3C2B, PTK2/FAK1 and ESR1 (dimethylated on arginine). Interacts with FASLG. Interacts (via SH2 domain) with the 'Tyr-402' phosphorylated form of PTK2B/PYK2. Interacts (via SH2 domain) with FLT3 (tyrosine phosphorylated). Interacts with PDGFRA (tyrosine phosphorylated). Interacts with CSF1R. Interacts (via SH2 and SH3 domain) with TNK2. Interacts (via protein kinase domain) with the tyrosine phosphorylated form of RUNX3 (via runt domain). Interacts with TRAF3 (via RING-type zinc finger domain). Interacts with RIGI, MAVS and TBK1. Interacts (via SH2 domain) with RACK1; the interaction is enhanced by tyrosine phosphorylation of RACK1 and inhibits SRC activity. Interacts with EPHB1; activates the MAPK/ERK cascade to regulate cell migration. Interacts with FCAMR. Interacts (via SH2 domain) with the 'Tyr-9' phosphorylated form of PDPK1. Interacts with AMOTL2; this interaction regulates the translocation of phosphorylated SRC to peripheral cell-matrix adhesion sites. Interacts with TRAP1. Interacts with CBLC; the interaction is enhanced when SRC is phosphorylated at Tyr-419. Interacts with ARHGEF5. Interacts (via cytoplasmic domain) with CEACAM1 (via SH2 domain); this interaction is regulated by trans-homophilic cell adhesion. Interacts with MPP2. Interacts with PRR7. Interacts (via kinase domain and to a lesser extent the SH2 domain) directly with PDLIM4; this interaction results in PTPN13-mediated dephosphorylation of this protein leading to its inactivation. Interacts with P85 (PIK3R1 or PIK3R2). Interacts with HNRNPA2B1. Interacts with IL6ST/gp130. Interacts (via SH3 domain) with PELP1 in the presence of 17-beta-estradiol. Interacts with AMBRA1. In terms of assembly, (Microbial infection) Interacts with HEV ORF3 protein; via the SH3 domain. (Microbial infection) Interacts (via SH2 domain) with HCV non-structural protein 5A (via N-terminus). In terms of processing, myristoylated at Gly-2, and this is essential for targeting to membranes. Post-translationally, dephosphorylated at Tyr-530 by PTPRJ. Phosphorylated on Tyr-530 by c-Src kinase (CSK). The phosphorylated form is termed pp60c-src. Dephosphorylated by PTPRJ at Tyr-419. Normally maintained in an inactive conformation with the SH2 domain engaged with Tyr-530, the SH3 domain engaged with the SH2-kinase linker, and Tyr-419 dephosphorylated. Dephosphorylation of Tyr-530 as a result of protein tyrosine phosphatase (PTP) action disrupts the intramolecular interaction between the SH2 domain and Tyr-530, Tyr-419 can then become autophosphorylated, resulting in SRC activation. Phosphorylation of Tyr-530 by CSK allows this interaction to reform, resulting in SRC inactivation. CDK5-mediated phosphorylation at Ser-75 targets SRC to ubiquitin-dependent degradation and thus leads to cytoskeletal reorganization. Phosphorylated by PTK2/FAK1; this enhances kinase activity. Phosphorylated by PTK2B/PYK2; this enhances kinase activity. Upon activation of IL6ST by IL6, Tyr-419 is phosphorylated and Tyr-530 dephosphorylated. Displays reduced levels of autophosphorylation at Tyr-419 compared to isoforms 2 and 3. In terms of processing, displays enhanced levels of autophosphorylation at Tyr-419 compared to isoform 1. Post-translationally, displays enhanced levels of autophosphorylation at Tyr-419 compared to isoform 1. Shows reduced phosphorylation at Tyr-527 compared to isoforms 1 and 2. S-nitrosylation is important for activation of its kinase activity. In terms of processing, ubiquitinated in response to CDK5-mediated phosphorylation. Ubiquitination mediated by CBLC requires SRC autophosphorylation at Tyr-419 and may lead to lysosomal degradation. In terms of tissue distribution, expressed ubiquitously. Expressed in the skin (at protein level). Platelets, neurons and osteoclasts express 5-fold to 200-fold higher levels than most other tissues. Expressed in spleen and liver. As to expression, expressed in brain.

The protein localises to the cell membrane. It is found in the mitochondrion inner membrane. Its subcellular location is the nucleus. It localises to the cytoplasm. The protein resides in the cytoskeleton. The protein localises to the perinuclear region. It is found in the cell junction. Its subcellular location is the focal adhesion. It catalyses the reaction L-tyrosyl-[protein] + ATP = O-phospho-L-tyrosyl-[protein] + ADP + H(+). With respect to regulation, phosphorylation by CSK at Tyr-530 inhibits kinase activity. Inhibitory phosphorylation at Tyr-530 is enhanced by heme. Further phosphorylation by CDK1 partially reactivates CSK-inactivated SRC and facilitates complete reactivation by protein tyrosine phosphatase PTPRC. Integrin engagement stimulates kinase activity. Phosphorylation by PTK2/FAK1 enhances kinase activity. Butein and pseudosubstrate-based peptide inhibitors like CIYKYYF act as inhibitors. Phosphorylation at Tyr-419 increases kinase activity. Non-receptor protein tyrosine kinase which is activated following engagement of many different classes of cellular receptors including immune response receptors, integrins and other adhesion receptors, receptor protein tyrosine kinases, G protein-coupled receptors as well as cytokine receptors. Participates in signaling pathways that control a diverse spectrum of biological activities including gene transcription, immune response, cell adhesion, cell cycle progression, apoptosis, migration, and transformation. Due to functional redundancy between members of the SRC kinase family, identification of the specific role of each SRC kinase is very difficult. SRC appears to be one of the primary kinases activated following engagement of receptors and plays a role in the activation of other protein tyrosine kinase (PTK) families. Receptor clustering or dimerization leads to recruitment of SRC to the receptor complexes where it phosphorylates the tyrosine residues within the receptor cytoplasmic domains. Plays an important role in the regulation of cytoskeletal organization through phosphorylation of specific substrates such as AFAP1. Phosphorylation of AFAP1 allows the SRC SH2 domain to bind AFAP1 and to localize to actin filaments. Cytoskeletal reorganization is also controlled through the phosphorylation of cortactin (CTTN). When cells adhere via focal adhesions to the extracellular matrix, signals are transmitted by integrins into the cell resulting in tyrosine phosphorylation of a number of focal adhesion proteins, including PTK2/FAK1 and paxillin (PXN). In addition to phosphorylating focal adhesion proteins, SRC is also active at the sites of cell-cell contact adherens junctions and phosphorylates substrates such as beta-catenin (CTNNB1), delta-catenin (CTNND1), and plakoglobin (JUP). Another type of cell-cell junction, the gap junction, is also a target for SRC, which phosphorylates connexin-43 (GJA1). SRC is implicated in regulation of pre-mRNA-processing and phosphorylates RNA-binding proteins such as KHDRBS1. Phosphorylates PKP3 at 'Tyr-195' in response to reactive oxygen species, which may cause the release of PKP3 from desmosome cell junctions into the cytoplasm. Also plays a role in PDGF-mediated tyrosine phosphorylation of both STAT1 and STAT3, leading to increased DNA binding activity of these transcription factors. Involved in the RAS pathway through phosphorylation of RASA1 and RASGRF1. Plays a role in EGF-mediated calcium-activated chloride channel activation. Required for epidermal growth factor receptor (EGFR) internalization through phosphorylation of clathrin heavy chain (CLTC and CLTCL1) at 'Tyr-1477'. Involved in beta-arrestin (ARRB1 and ARRB2) desensitization through phosphorylation and activation of GRK2, leading to beta-arrestin phosphorylation and internalization. Has a critical role in the stimulation of the CDK20/MAPK3 mitogen-activated protein kinase cascade by epidermal growth factor. Might be involved not only in mediating the transduction of mitogenic signals at the level of the plasma membrane but also in controlling progression through the cell cycle via interaction with regulatory proteins in the nucleus. Plays an important role in osteoclastic bone resorption in conjunction with PTK2B/PYK2. Both the formation of a SRC-PTK2B/PYK2 complex and SRC kinase activity are necessary for this function. Recruited to activated integrins by PTK2B/PYK2, thereby phosphorylating CBL, which in turn induces the activation and recruitment of phosphatidylinositol 3-kinase to the cell membrane in a signaling pathway that is critical for osteoclast function. Promotes energy production in osteoclasts by activating mitochondrial cytochrome C oxidase. Phosphorylates DDR2 on tyrosine residues, thereby promoting its subsequent autophosphorylation. Phosphorylates RUNX3 and COX2 on tyrosine residues, TNK2 on 'Tyr-284' and CBL on 'Tyr-731'. Enhances RIGI-elicited antiviral signaling. Phosphorylates PDPK1 at 'Tyr-9', 'Tyr-373' and 'Tyr-376'. Phosphorylates BCAR1 at 'Tyr-128'. Phosphorylates CBLC at multiple tyrosine residues, phosphorylation at 'Tyr-341' activates CBLC E3 activity. Phosphorylates synaptic vesicle protein synaptophysin (SYP). Involved in anchorage-independent cell growth. Required for podosome formation. Mediates IL6 signaling by activating YAP1-NOTCH pathway to induce inflammation-induced epithelial regeneration. Phosphorylates OTUB1, promoting deubiquitination of RPTOR. Phosphorylates caspase CASP8 at 'Tyr-380' which negatively regulates CASP8 processing and activation, down-regulating CASP8 proapoptotic function. Its function is as follows. Non-receptor protein tyrosine kinase which phosphorylates synaptophysin with high affinity. Functionally, non-receptor protein tyrosine kinase which shows higher basal kinase activity than isoform 1, possibly due to weakened intramolecular interactions which enhance autophosphorylation of Tyr-419 and subsequent activation. The SH3 domain shows reduced affinity with the linker sequence between the SH2 and kinase domains which may account for the increased basal activity. Displays altered substrate specificity compared to isoform 1, showing weak affinity for synaptophysin and for peptide substrates containing class I or class II SH3 domain-binding motifs. Plays a role in L1CAM-mediated neurite elongation, possibly by acting downstream of L1CAM to drive cytoskeletal rearrangements involved in neurite outgrowth. In terms of biological role, non-receptor protein tyrosine kinase which shows higher basal kinase activity than isoform 1, possibly due to weakened intramolecular interactions which enhance autophosphorylation of Tyr-419 and subsequent activation. The SH3 domain shows reduced affinity with the linker sequence between the SH2 and kinase domains which may account for the increased basal activity. Displays altered substrate specificity compared to isoform 1, showing weak affinity for synaptophysin and for peptide substrates containing class I or class II SH3 domain-binding motifs. Plays a role in neurite elongation. The sequence is that of Proto-oncogene tyrosine-protein kinase Src from Homo sapiens (Human).